Here is a 151-residue protein sequence, read N- to C-terminus: Large ribosomal subunit protein bL9 (151 aa).

The protein belongs to the bacterial ribosomal protein bL9 family.

Its function is as follows. Binds to the 23S rRNA. This chain is Large ribosomal subunit protein bL9, found in Prochlorococcus marinus (strain MIT 9215).